The following is a 120-amino-acid chain: Large ribosomal subunit protein bL19c (120 aa).

It belongs to the bacterial ribosomal protein bL19 family.

It localises to the plastid. Its subcellular location is the chloroplast. The protein is Large ribosomal subunit protein bL19c (rpl19) of Trieres chinensis (Marine centric diatom).